The primary structure comprises 173 residues: MEIVDLKKWIRDIPDFPEKGVIFRDITPLLKNPEVFKYSVEKIAELIKEWDFDCIVSPESRGFIFATPLAYLMNKEFVPIRKPGKLPYKTYSISYELEYGQTSLEMHVDAIDKGEKVIVVDDVLATGGTTKAIKELVDRAGGKTVGVVCLAELTYLNPRENLKDLEIASLIRY.

This sequence belongs to the purine/pyrimidine phosphoribosyltransferase family. Homodimer.

Its subcellular location is the cytoplasm. It catalyses the reaction AMP + diphosphate = 5-phospho-alpha-D-ribose 1-diphosphate + adenine. It participates in purine metabolism; AMP biosynthesis via salvage pathway; AMP from adenine: step 1/1. Catalyzes a salvage reaction resulting in the formation of AMP, that is energically less costly than de novo synthesis. In Petrotoga mobilis (strain DSM 10674 / SJ95), this protein is Adenine phosphoribosyltransferase.